The sequence spans 179 residues: Large ribosomal subunit protein uL5 (179 aa).

The protein belongs to the universal ribosomal protein uL5 family. In terms of assembly, part of the 50S ribosomal subunit; part of the 5S rRNA/L5/L18/L25 subcomplex. Contacts the 5S rRNA and the P site tRNA. Forms a bridge to the 30S subunit in the 70S ribosome.

In terms of biological role, this is one of the proteins that bind and probably mediate the attachment of the 5S RNA into the large ribosomal subunit, where it forms part of the central protuberance. In the 70S ribosome it contacts protein S13 of the 30S subunit (bridge B1b), connecting the 2 subunits; this bridge is implicated in subunit movement. Contacts the P site tRNA; the 5S rRNA and some of its associated proteins might help stabilize positioning of ribosome-bound tRNAs. This is Large ribosomal subunit protein uL5 from Synechococcus elongatus (strain ATCC 33912 / PCC 7942 / FACHB-805) (Anacystis nidulans R2).